The following is a 142-amino-acid chain: Extracellular globin-1 (142 aa).

Positions 1–142 (ECLVTEGLKV…DQIIDGIKDI (142 aa)) constitute a Globin domain. Cys-2 and Cys-131 are joined by a disulfide. Heme b is bound at residue His-94.

It belongs to the globin family. In terms of assembly, the extracellular hemoglobin of the earthworm consists of 12 subunits that have a hexagonal bilayer structure with a molecular weight near 3.8 million. Each one-twelfth subunit is composed primarily of disulfide linked trimers (chains A, B, and C) and monomers (chain D).

The sequence is that of Extracellular globin-1 from Lumbricus terrestris (Common earthworm).